Reading from the N-terminus, the 590-residue chain is DEAD-box ATP-dependent RNA helicase 27 (590 aa).

Positions 1–92 (MAPAPATTSS…EKGNEGGSGI (92 aa)) are disordered. The segment covering 27 to 62 (SDSESEELSYDTAAADEEEGEEEAPNQMEELEEEQE) has biased composition (acidic residues). The stretch at 40 to 87 (AADEEEGEEEAPNQMEELEEEQEEEKKEKKQKKEMSKEKKRKKEKGNE) forms a coiled coil. Basic and acidic residues predominate over residues 63-76 (EEKKEKKQKKEMSK). The Q motif signature appears at 96 to 124 (MLFSELGVSEPTARAIREMNYTYLTQIQA). Residues 127–302 (IPHLLNGKDV…KLSFEKNEES (176 aa)) enclose the Helicase ATP-binding domain. ATP is bound at residue 140–147 (AKTGSGKT). Positions 250–253 (DEAD) match the DEAD box motif. Positions 335–488 (RFLVLYAFLK…NKVPNLQSHL (154 aa)) constitute a Helicase C-terminal domain. Residues 551 to 590 (SASKHRRKMRKVDGGRRHGISAANPYGRKGGDDKRQFARF) form a disordered region. Positions 579-590 (KGGDDKRQFARF) are enriched in basic and acidic residues.

The protein belongs to the DEAD box helicase family. DDX18/HAS1 subfamily.

It catalyses the reaction ATP + H2O = ADP + phosphate + H(+). The protein is DEAD-box ATP-dependent RNA helicase 27 of Oryza sativa subsp. japonica (Rice).